The chain runs to 93 residues: NADH-ubiquinone oxidoreductase chain 4L (93 aa).

A run of 3 helical transmembrane segments spans residues 3 to 23 (LTIL…GPLG), 27 to 47 (IIKL…LIIL), and 55 to 75 (ILGL…SAIG).

The protein belongs to the complex I subunit 4L family.

Its subcellular location is the mitochondrion membrane. The catalysed reaction is a ubiquinone + NADH + 5 H(+)(in) = a ubiquinol + NAD(+) + 4 H(+)(out). Its function is as follows. Core subunit of the mitochondrial membrane respiratory chain NADH dehydrogenase (Complex I) that is believed to belong to the minimal assembly required for catalysis. Complex I functions in the transfer of electrons from NADH to the respiratory chain. The immediate electron acceptor for the enzyme is believed to be ubiquinone. The polypeptide is NADH-ubiquinone oxidoreductase chain 4L (ND4L) (Wickerhamomyces canadensis (Yeast)).